The primary structure comprises 503 residues: Diels-Alderase cghA (503 aa).

Belongs to the Diels-Alderase family.

The enzyme catalyses (2S)-3-[(2S)-3,5-dioxo-4-[(2E,4R,6R,8E,10E,12E)-4,6,12-trimethyltetradeca-2,8,10,12-tetraenoyl]pyrrolidin-2-yl]-2-hydroxy-2-methylpropanoate = sch 210972. Its pathway is secondary metabolite biosynthesis. Functionally, diels-Alderase; part of the gene cluster that mediates the biosynthesis of the tetramic acid Sch210972, a potential anti-HIV fungal natural product that contains a decalin core. The PKS module of cghG together with the enoylreductase cghC catalyze the formation of the polyketide unit which is then conjugated to 4-hydroxyl-4-methyl glutamate (HMG) by the condensation domain of the cghG NRPS module. One unique structural feature of Sch210972 is the tetramic acid motif proposed to be derived from the non-proteinogenic amino acid HMG, by a Dieckmann-type condensation catalyzed by the reductase domain of cghG. The aldolase cghB catalyzes the aldol condensation of 2 molecules of pyruvic acid to yield the intermediate 4-hydroxyl-4-methyl-2-oxoglutarate (HMOG), which can then be stereoselectively transaminated by an unidentified enzyme to form HMG. The Diels-Alderase cghA then uses the Dieckmann product released by cghG as substrate and catalyzes the Diels-Alder cycloaddition to form the decalin ring of Sch210972. CghA also suppresses the nonenzymatic formation of the alternative stereoisomer. This Chaetomium globosum (strain ATCC 6205 / CBS 148.51 / DSM 1962 / NBRC 6347 / NRRL 1970) (Soil fungus) protein is Diels-Alderase cghA.